The primary structure comprises 194 residues: Protein PHLOEM PROTEIN 2-LIKE A2 (194 aa).

A helical transmembrane segment spans residues 49-71 (VTFVFFCFFKISLNSAYLYTLYS).

As to expression, vascular tissues, specifically in phloem companion cell-sieve element complexes.

The protein localises to the membrane. This is Protein PHLOEM PROTEIN 2-LIKE A2 (PP2A2) from Arabidopsis thaliana (Mouse-ear cress).